The chain runs to 395 residues: Elongation factor Tu (395 aa).

The 195-residue stretch at 10–204 (KPHLNIGTIG…AVDNWIEEPV (195 aa)) folds into the tr-type G domain. A G1 region spans residues 19–26 (GHVDHGKT). Residue 19–26 (GHVDHGKT) coordinates GTP. Thr26 is a Mg(2+) binding site. Residues 60–64 (GITIN) form a G2 region. A G3 region spans residues 81 to 84 (DCPG). Residues 81–85 (DCPGH) and 136–139 (NKVD) contribute to the GTP site. Residues 136-139 (NKVD) form a G4 region. Residues 174–176 (SAL) are G5.

Belongs to the TRAFAC class translation factor GTPase superfamily. Classic translation factor GTPase family. EF-Tu/EF-1A subfamily. As to quaternary structure, monomer.

The protein localises to the cytoplasm. The enzyme catalyses GTP + H2O = GDP + phosphate + H(+). Its function is as follows. GTP hydrolase that promotes the GTP-dependent binding of aminoacyl-tRNA to the A-site of ribosomes during protein biosynthesis. The sequence is that of Elongation factor Tu from Flavobacterium johnsoniae (strain ATCC 17061 / DSM 2064 / JCM 8514 / BCRC 14874 / CCUG 350202 / NBRC 14942 / NCIMB 11054 / UW101) (Cytophaga johnsonae).